Reading from the N-terminus, the 725-residue chain is IML2-like protein YKR018C (725 aa).

At Thr196 the chain carries Phosphothreonine. Phosphoserine occurs at positions 246, 377, and 380.

It belongs to the IML2 family.

It is found in the cytoplasm. It localises to the nucleus. This is IML2-like protein YKR018C from Saccharomyces cerevisiae (strain ATCC 204508 / S288c) (Baker's yeast).